The sequence spans 487 residues: Catalase (487 aa).

Residues 1–20 (MSQRVLTTESGAPVADNQNS) are disordered. Residues histidine 54 and asparagine 127 contribute to the active site. Residue tyrosine 337 coordinates heme.

This sequence belongs to the catalase family. The cofactor is heme.

It catalyses the reaction 2 H2O2 = O2 + 2 H2O. Decomposes hydrogen peroxide into water and oxygen; serves to protect cells from the toxic effects of hydrogen peroxide. This is Catalase (katA) from Streptomyces coelicolor (strain ATCC BAA-471 / A3(2) / M145).